We begin with the raw amino-acid sequence, 61 residues long: Small ribosomal subunit protein bS21 (61 aa).

The disordered stretch occupies residues 34 to 61; sequence KREHYESPSVKRKKKSEAARKRKYKYNK. The span at 43-61 shows a compositional bias: basic residues; it reads VKRKKKSEAARKRKYKYNK.

This sequence belongs to the bacterial ribosomal protein bS21 family.

The sequence is that of Small ribosomal subunit protein bS21 from Thermoanaerobacter pseudethanolicus (strain ATCC 33223 / 39E) (Clostridium thermohydrosulfuricum).